A 457-amino-acid chain; its full sequence is uncharacterized protein (457 aa).

The next 12 membrane-spanning stretches (helical) occupy residues 18–38 (VMTVAGATVGFGATWRFPYLV), 44–64 (GAYVLLFCIAMIVIGIPMILV), 101–121 (MGLLGAFGIMAYYMVLGGWVI), 158–178 (IIFYTLLFVIVNYIILAKGII), 188–208 (LMPLLFIFLIGMVIRNVTLPG), 228–248 (LFIFVLGQVFFALSLGFGVLI), 273–293 (IIAVLAGFMIFPSLFTFGIEP), 294–314 (NAGPTLVFQSLPIVFSHLWAG), 316–336 (FFAIIFFGLLLIAALTTSITI), 355–375 (AIVLTLSGIFLLGNIPAILGD), 396–416 (SGNILFMLTALGCAIFVGFVL), and 433–453 (IKIWFNYVKFVVPLIILVIFI).

It belongs to the sodium:neurotransmitter symporter (SNF) (TC 2.A.22) family.

It is found in the cell membrane. Functionally, putative sodium-dependent transporter. This is an uncharacterized protein from Haemophilus influenzae (strain ATCC 51907 / DSM 11121 / KW20 / Rd).